Reading from the N-terminus, the 662-residue chain is tRNA 5-methylaminomethyl-2-thiouridine biosynthesis bifunctional protein MnmC (662 aa).

A tRNA (mnm(5)s(2)U34)-methyltransferase region spans residues 1–245 (MKQNAIQPAN…KREMLTGEMA (245 aa)). An FAD-dependent cmnm(5)s(2)U34 oxidoreductase region spans residues 270–662 (IGGGIASALL…RKLLKGKAVK (393 aa)).

The protein in the N-terminal section; belongs to the methyltransferase superfamily. tRNA (mnm(5)s(2)U34)-methyltransferase family. This sequence in the C-terminal section; belongs to the DAO family. Requires FAD as cofactor.

Its subcellular location is the cytoplasm. The enzyme catalyses 5-aminomethyl-2-thiouridine(34) in tRNA + S-adenosyl-L-methionine = 5-methylaminomethyl-2-thiouridine(34) in tRNA + S-adenosyl-L-homocysteine + H(+). Catalyzes the last two steps in the biosynthesis of 5-methylaminomethyl-2-thiouridine (mnm(5)s(2)U) at the wobble position (U34) in tRNA. Catalyzes the FAD-dependent demodification of cmnm(5)s(2)U34 to nm(5)s(2)U34, followed by the transfer of a methyl group from S-adenosyl-L-methionine to nm(5)s(2)U34, to form mnm(5)s(2)U34. This chain is tRNA 5-methylaminomethyl-2-thiouridine biosynthesis bifunctional protein MnmC, found in Klebsiella pneumoniae subsp. pneumoniae (strain ATCC 700721 / MGH 78578).